A 479-amino-acid polypeptide reads, in one-letter code: 5-hydroxytryptamine receptor 2B (479 aa).

Topologically, residues 1-55 (MASSYKMSEQSTTSEHILQKTCDHLILTNRSGLETDSVAEEMKQTVEGQGHTVHW) are extracellular. N-linked (GlcNAc...) asparagine glycosylation is present at asparagine 29. A helical transmembrane segment spans residues 56 to 78 (AALLILAVIIPTIGGNILVILAV). Over 79–89 (ALEKRLQYATN) the chain is Cytoplasmic. A helical transmembrane segment spans residues 90–112 (YFLMSLAIADLLVGLFVMPIALL). Topologically, residues 113–128 (TIMFEAIWPLPLALCP) are extracellular. The cysteines at positions 127 and 206 are disulfide-linked. Residues 129 to 150 (AWLFLDVLFSTASIMHLCAISL) traverse the membrane as a helical segment. Ergotamine is bound by residues aspartate 134 and threonine 139. The DRY motif; important for ligand-induced conformation changes motif lies at 151–153 (DRY). Over 151 to 170 (DRYIAIKKPIQANQCNSRAT) the chain is Cytoplasmic. The helical transmembrane segment at 171 to 191 (AFIKITVVWLISIGIAIPVPI) threads the bilayer. The Extracellular segment spans residues 192-215 (KGIETDVINPHNVTCELTKDRFGS). Leucine 208 is a binding site for ergotamine. A [DE]RFG motif; may stabilize a conformation that preferentially activates signaling via beta-arrestin family members motif is present at residues 211–214 (DRFG). The helical transmembrane segment at 216–238 (FMVFGSLAAFFAPLTIMVVTYFL) threads the bilayer. At 239-323 (TIHTLQKKAY…TISNEQRASK (85 aa)) the chain is on the cytoplasmic side. A helical membrane pass occupies residues 324-344 (ALGVVFFLFLLMWCPFFITNL). Residues 345–359 (TLALCDSCNQTTLKT) are Extracellular-facing. A disulfide bond links cysteine 349 and cysteine 352. Residues 360–381 (LLEIFVWIGYVSSGVNPLIYTL) traverse the membrane as a helical segment. The NPxxY motif; important for ligand-induced conformation changes and signaling signature appears at 375–379 (NPLIY). The Cytoplasmic portion of the chain corresponds to 382-479 (FNKTFREAFG…DKAEEQVSYI (98 aa)). Cysteine 396 carries S-palmitoyl cysteine lipidation. A PDZ-binding motif is present at residues 477–479 (SYI).

This sequence belongs to the G-protein coupled receptor 1 family. In terms of assembly, interacts (via C-terminus) with MPDZ. As to expression, ubiquitous. Detected in intestine, heart, skeletal muscle, testis, urinary bladder, stomach, liver, lung, brain and kidney. Detected in osteoblasts. Detected in the raphe nucleus in the brain, in dorsal root ganglion neurons, the brain stem, cerebellum and spinal cord. Detected in interstitial cells of Cajal in the small intestine.

Its subcellular location is the cell membrane. It is found in the synapse. The protein localises to the synaptosome. In terms of biological role, G-protein coupled receptor for 5-hydroxytryptamine (serotonin). Also functions as a receptor for various ergot alkaloid derivatives and psychoactive substances. Ligand binding causes a conformation change that triggers signaling via guanine nucleotide-binding proteins (G proteins) and modulates the activity of downstream effectors. HTR2B is coupled to G(q)/G(11) G alpha proteins and activates phospholipase C-beta, releasing diacylglycerol (DAG) and inositol 1,4,5-trisphosphate (IP3) second messengers that modulate the activity of phosphatidylinositol 3-kinase and promote the release of Ca(2+) ions from intracellular stores, respectively. Beta-arrestin family members inhibit signaling via G proteins and mediate activation of alternative signaling pathways. Plays a role in the regulation of dopamine and 5-hydroxytryptamine release, 5-hydroxytryptamine uptake and in the regulation of extracellular dopamine and 5-hydroxytryptamine levels, and thereby affects neural activity. May play a role in the perception of pain. Plays a role in the regulation of behavior, including impulsive behavior. Required for normal proliferation of embryonic cardiac myocytes and normal heart development. Protects cardiomyocytes against apoptosis. Plays a role in the adaptation of pulmonary arteries to chronic hypoxia. Plays a role in vasoconstriction. Required for normal osteoblast function and proliferation, and for maintaining normal bone density. Required for normal proliferation of the interstitial cells of Cajal in the intestine. This Mus musculus (Mouse) protein is 5-hydroxytryptamine receptor 2B (Htr2b).